A 157-amino-acid polypeptide reads, in one-letter code: MKESILDVLLYLFEHYFSEDADLVRDRDSLQNGLIQAGFSPAEISKAFDWLDALAEQRPSVARPHVDGPVRIYHGPELDKLDVDCRGFLLFLEQHRILDADQRELVLDRAMALDQDELDLDDLKWVVLMVLFNQPGAEAAYAWMETQMFLDEPEPVH.

Belongs to the Smg family.

The polypeptide is Protein Smg homolog (Xanthomonas campestris pv. campestris (strain 8004)).